Here is an 804-residue protein sequence, read N- to C-terminus: MKFTLSWLKDHLETDASLDEICDKLTAIGLEVGHVDDRSSLKGFVIAKVLKAMKHPDADKLQILLVDTGSGTPVQVICGAPNARVGLVGVLALPGTYVPGLDVTLSVGKIRGVESFGMMCSQAELELSNEHDGIIELPEDAPIGGLFATYAGLDDPVIDLSLTPNRSDCTGVHGIARDLAAAGIGRLRKLSLPKFVSSFETPLRVFLDFSQDASLCLGFAWREVRNIQNGVSPQWMQQRLSAIGLRPMNALVDMSNYISFDVGRPLHVFDADKIKGDLRVRRGREGEQLQALNGKIYNLSVKDCVIADEEGVVSIAGIMGGERTSCDEMTRRVIIESALWDARSIAQTGRALGLVSDARYRFERGVDPAFMETGLEVATELVLRLCGGEGSKTKIVGYQQPEIKQIAFPFSEIKRLTHLEIEREQVITILTNLGFGIEGEGNVVTVKVPTWRPDIAGKADLVEEVMRIYGLDKIEPIPLEGFAEAKGQVLTCTQIRSRVTRLALVDRGMREAVTWSFISESQAIAFGGGQAQLKLVNPIAADMSVMRPSLLPGLLIAAQRNADRGFPDLALFEVSNIYEDDTPEKQQSVAGGIRRGTERFEGAGRFWDGHTRTVDVFEAKADALAVLEACGLDIDKVQIEVGAPDWYHPGRSGVMKLGSKIIVGFFGVLHPAILERLDVSGPLCGFEIFLDRIPESKKKATKSRSPLKLSPFQMVRRDFAFVVDKVITSSLIVRAASGADKKLIHSVRVFDVFEDLSLGEDKKSVAIEVAIQPIERTLTDGDIEALASKVVENVTKATGAYLRR.

The 111-residue stretch at 38–148 folds into the tRNA-binding domain; it reads RSSLKGFVIA…EDAPIGGLFA (111 aa). The B5 domain maps to 401-476; sequence PEIKQIAFPF…RIYGLDKIEP (76 aa). 4 residues coordinate Mg(2+): aspartate 454, aspartate 460, glutamate 463, and glutamate 464. The FDX-ACB domain occupies 710–803; that stretch reads SPFQMVRRDF…VTKATGAYLR (94 aa).

It belongs to the phenylalanyl-tRNA synthetase beta subunit family. Type 1 subfamily. In terms of assembly, tetramer of two alpha and two beta subunits. Mg(2+) is required as a cofactor.

Its subcellular location is the cytoplasm. The enzyme catalyses tRNA(Phe) + L-phenylalanine + ATP = L-phenylalanyl-tRNA(Phe) + AMP + diphosphate + H(+). In Bartonella quintana (strain Toulouse) (Rochalimaea quintana), this protein is Phenylalanine--tRNA ligase beta subunit.